Here is a 364-residue protein sequence, read N- to C-terminus: MKLSLFSTFAAVIIGALALPQGPGGGGGSVTCPGGQSTSNSQCCVWFDVLDDLQTNFYQGSKCESPVRKILRIVFHDAIGFSPALTAAGQFGGGGADGSIIAHSNIELAFPANGGLTDTIEALRAVGINHGVSFGDLIQFATAVGMSNCPGSPRLEFLTGRSNSSQPSPPSLIPGPGNTVTAILDRMGDAGFSPDEVVDLLAAHSLASQEGLNSAIFRSPLDSTPQVFDTQFYIETLLKGTTQPGPSLGFAEELSPFPGEFRMRSDALLARDSRTACRWQSMTSSNEVMGQRYRAAMAKMSVLGFDRNALTDCSDVIPSAVSNNAAPVIPGGLTVDDIEVSCPSEPFPEIATASGPLPSLAPAP.

Residues Met-1 to Pro-20 form the signal peptide. Gln-21 carries the pyrrolidone carboxylic acid modification. Cystine bridges form between Cys-32/Cys-44, Cys-43/Cys-313, Cys-63/Cys-149, and Cys-277/Cys-342. The active-site Proton acceptor is His-76. Ca(2+) contacts are provided by Asp-77, Gly-95, Asp-97, and Ser-99. N-linked (GlcNAc...) (high mannose) asparagine glycosylation is present at Asn-163. His-204 contacts heme b. Residues Ser-205, Asp-222, Thr-224, Val-227, and Asp-229 each contribute to the Ca(2+) site.

It belongs to the peroxidase family. Ligninase subfamily. The cofactor is Ca(2+). Heme b serves as cofactor.

It is found in the secreted. The enzyme catalyses 2 a phenolic donor + H2O2 = 2 a phenolic radical donor + 2 H2O. The chain is Peroxidase from Arthromyces ramosus.